The primary structure comprises 158 residues: Transcription elongation factor GreA (158 aa).

The stretch at 45 to 72 forms a coiled coil; sequence AEYHAAREQQSFIEGRIKQLEGELSHAE.

This sequence belongs to the GreA/GreB family.

Necessary for efficient RNA polymerase transcription elongation past template-encoded arresting sites. The arresting sites in DNA have the property of trapping a certain fraction of elongating RNA polymerases that pass through, resulting in locked ternary complexes. Cleavage of the nascent transcript by cleavage factors such as GreA or GreB allows the resumption of elongation from the new 3'terminus. GreA releases sequences of 2 to 3 nucleotides. The polypeptide is Transcription elongation factor GreA (Xylella fastidiosa (strain M12)).